The sequence spans 379 residues: EP300-interacting inhibitor of differentiation 3 (379 aa).

Residues 32–58 (LKQVEEEEEVEALKVEVAAASDTESDT) are a coiled coil.

The protein belongs to the NSE4 family. Component of the SMC5-SMC6 complex which consists at least of SMC5, SMC6, NSMCE2, NSMCE1, NSMCE4A or EID3 and NSMCE3. NSMCE1, NSMCE4A or EID3 and NSMCE3 probably form a subcomplex that bridges the head domains of the SMC5:SMC6 heterodimer. Homodimer, and heterodimer with EID2. Interacts with the C-terminal region of CREBBP.

The protein localises to the nucleus. Its subcellular location is the cytoplasm. It is found in the chromosome. The protein resides in the telomere. Functionally, tissue-specific component of the SMC5-SMC6 complex, a complex involved in repair of DNA double-strand breaks by homologous recombination. The complex may promote sister chromatid homologous recombination by recruiting the SMC1-SMC3 cohesin complex to double-strand breaks. The complex is required for telomere maintenance via recombination and mediates sumoylation of shelterin complex (telosome) components. Acts as a repressor of nuclear receptor-dependent transcription possibly by interfering with CREBBP-dependent coactivation. May function as a coinhibitor of other CREBBP/EP300-dependent transcription factors. The chain is EP300-interacting inhibitor of differentiation 3 from Bos taurus (Bovine).